The chain runs to 320 residues: Probable protein adenylyltransferase aq_aa38 (320 aa).

Residues 76-206 (VSEALILWIY…AIVVVEKLSR (131 aa)) enclose the Fido domain. ATP is bound by residues 100-101 (KS), 157-159 (GNG), and Arg-163.

This sequence belongs to the fic family.

The enzyme catalyses L-tyrosyl-[protein] + ATP = O-(5'-adenylyl)-L-tyrosyl-[protein] + diphosphate. It carries out the reaction L-threonyl-[protein] + ATP = 3-O-(5'-adenylyl)-L-threonyl-[protein] + diphosphate. Its function is as follows. Probable adenylyltransferase that mediates the addition of adenosine 5'-monophosphate (AMP) to specific residues of target proteins. This Aquifex aeolicus (strain VF5) protein is Probable protein adenylyltransferase aq_aa38.